The chain runs to 216 residues: Imidazole glycerol phosphate synthase subunit HisH (216 aa).

The region spanning 2 to 216 is the Glutamine amidotransferase type-1 domain; it reads SIAIIDYGSG…LISNFLRWKP (215 aa). C88 (nucleophile) is an active-site residue. Active-site residues include H196 and E198.

As to quaternary structure, heterodimer of HisH and HisF.

The protein resides in the cytoplasm. It carries out the reaction 5-[(5-phospho-1-deoxy-D-ribulos-1-ylimino)methylamino]-1-(5-phospho-beta-D-ribosyl)imidazole-4-carboxamide + L-glutamine = D-erythro-1-(imidazol-4-yl)glycerol 3-phosphate + 5-amino-1-(5-phospho-beta-D-ribosyl)imidazole-4-carboxamide + L-glutamate + H(+). The catalysed reaction is L-glutamine + H2O = L-glutamate + NH4(+). It participates in amino-acid biosynthesis; L-histidine biosynthesis; L-histidine from 5-phospho-alpha-D-ribose 1-diphosphate: step 5/9. Its function is as follows. IGPS catalyzes the conversion of PRFAR and glutamine to IGP, AICAR and glutamate. The HisH subunit catalyzes the hydrolysis of glutamine to glutamate and ammonia as part of the synthesis of IGP and AICAR. The resulting ammonia molecule is channeled to the active site of HisF. The polypeptide is Imidazole glycerol phosphate synthase subunit HisH (Bradyrhizobium diazoefficiens (strain JCM 10833 / BCRC 13528 / IAM 13628 / NBRC 14792 / USDA 110)).